A 106-amino-acid chain; its full sequence is Large ribosomal subunit protein uL30 (106 aa).

The protein belongs to the universal ribosomal protein uL30 family. In terms of assembly, part of the 50S ribosomal subunit.

The polypeptide is Large ribosomal subunit protein uL30 (Ruthia magnifica subsp. Calyptogena magnifica).